A 347-amino-acid chain; its full sequence is N-acetyl-gamma-glutamyl-phosphate reductase (347 aa).

Residue Cys-151 is part of the active site.

This sequence belongs to the NAGSA dehydrogenase family. Type 1 subfamily.

The protein localises to the cytoplasm. The catalysed reaction is N-acetyl-L-glutamate 5-semialdehyde + phosphate + NADP(+) = N-acetyl-L-glutamyl 5-phosphate + NADPH + H(+). It participates in amino-acid biosynthesis; L-arginine biosynthesis; N(2)-acetyl-L-ornithine from L-glutamate: step 3/4. Catalyzes the NADPH-dependent reduction of N-acetyl-5-glutamyl phosphate to yield N-acetyl-L-glutamate 5-semialdehyde. The polypeptide is N-acetyl-gamma-glutamyl-phosphate reductase (Pelotomaculum thermopropionicum (strain DSM 13744 / JCM 10971 / SI)).